A 199-amino-acid chain; its full sequence is Recombination protein RecR (199 aa).

The C4-type zinc finger occupies 57–72 (CSQCHNITDTDPCQIC). In terms of domain architecture, Toprim spans 80–176 (TTICVVQESR…KVTRLAHGLP (97 aa)).

Belongs to the RecR family.

In terms of biological role, may play a role in DNA repair. It seems to be involved in an RecBC-independent recombinational process of DNA repair. It may act with RecF and RecO. The polypeptide is Recombination protein RecR (Shouchella clausii (strain KSM-K16) (Alkalihalobacillus clausii)).